Here is a 145-residue protein sequence, read N- to C-terminus: D-aminoacyl-tRNA deacylase (145 aa).

Positions 137 to 138 match the Gly-cisPro motif, important for rejection of L-amino acids motif; sequence GP.

The protein belongs to the DTD family. As to quaternary structure, homodimer.

The protein localises to the cytoplasm. The enzyme catalyses glycyl-tRNA(Ala) + H2O = tRNA(Ala) + glycine + H(+). It carries out the reaction a D-aminoacyl-tRNA + H2O = a tRNA + a D-alpha-amino acid + H(+). Its function is as follows. An aminoacyl-tRNA editing enzyme that deacylates mischarged D-aminoacyl-tRNAs. Also deacylates mischarged glycyl-tRNA(Ala), protecting cells against glycine mischarging by AlaRS. Acts via tRNA-based rather than protein-based catalysis; rejects L-amino acids rather than detecting D-amino acids in the active site. By recycling D-aminoacyl-tRNA to D-amino acids and free tRNA molecules, this enzyme counteracts the toxicity associated with the formation of D-aminoacyl-tRNA entities in vivo and helps enforce protein L-homochirality. In Pelobacter propionicus (strain DSM 2379 / NBRC 103807 / OttBd1), this protein is D-aminoacyl-tRNA deacylase.